The primary structure comprises 627 residues: Carnitine O-acetyltransferase, mitochondrial (627 aa).

His336 serves as the catalytic Proton acceptor. Residues Lys418 and 422-429 (KKFKVSPD) each bind CoA. (R)-carnitine is bound by residues Tyr451, Ser453, and Thr464. Gln553 contributes to the CoA binding site. Residues 625–627 (PKL) carry the Microbody targeting signal motif.

This sequence belongs to the carnitine/choline acetyltransferase family.

Its subcellular location is the peroxisome. The protein resides in the mitochondrion inner membrane. The catalysed reaction is (R)-carnitine + acetyl-CoA = O-acetyl-(R)-carnitine + CoA. Carnitine acetylase is specific for short chain fatty acids. Carnitine acetylase seems to affect the flux through the pyruvate dehydrogenase complex. It may be involved as well in the transport of acetyl-CoA into mitochondria. The polypeptide is Carnitine O-acetyltransferase, mitochondrial (CAT2) (Candida tropicalis (Yeast)).